We begin with the raw amino-acid sequence, 567 residues long: Proline--tRNA ligase (567 aa).

This sequence belongs to the class-II aminoacyl-tRNA synthetase family. ProS type 1 subfamily. As to quaternary structure, homodimer.

The protein resides in the cytoplasm. It catalyses the reaction tRNA(Pro) + L-proline + ATP = L-prolyl-tRNA(Pro) + AMP + diphosphate. Functionally, catalyzes the attachment of proline to tRNA(Pro) in a two-step reaction: proline is first activated by ATP to form Pro-AMP and then transferred to the acceptor end of tRNA(Pro). As ProRS can inadvertently accommodate and process non-cognate amino acids such as alanine and cysteine, to avoid such errors it has two additional distinct editing activities against alanine. One activity is designated as 'pretransfer' editing and involves the tRNA(Pro)-independent hydrolysis of activated Ala-AMP. The other activity is designated 'posttransfer' editing and involves deacylation of mischarged Ala-tRNA(Pro). The misacylated Cys-tRNA(Pro) is not edited by ProRS. In Stenotrophomonas maltophilia (strain K279a), this protein is Proline--tRNA ligase.